The following is a 364-amino-acid chain: Histidinol-phosphate aminotransferase (364 aa).

Residue Lys-225 is modified to N6-(pyridoxal phosphate)lysine.

It belongs to the class-II pyridoxal-phosphate-dependent aminotransferase family. Histidinol-phosphate aminotransferase subfamily. Homodimer. Requires pyridoxal 5'-phosphate as cofactor.

It carries out the reaction L-histidinol phosphate + 2-oxoglutarate = 3-(imidazol-4-yl)-2-oxopropyl phosphate + L-glutamate. It participates in amino-acid biosynthesis; L-histidine biosynthesis; L-histidine from 5-phospho-alpha-D-ribose 1-diphosphate: step 7/9. This is Histidinol-phosphate aminotransferase from Sulfurovum sp. (strain NBC37-1).